A 122-amino-acid chain; its full sequence is Small ribosomal subunit protein uS13 (122 aa).

Residues 99-122 are disordered; sequence RGQRTHTNARTRKGPAKAIAGKKK.

Belongs to the universal ribosomal protein uS13 family. Part of the 30S ribosomal subunit. Forms a loose heterodimer with protein S19. Forms two bridges to the 50S subunit in the 70S ribosome.

In terms of biological role, located at the top of the head of the 30S subunit, it contacts several helices of the 16S rRNA. In the 70S ribosome it contacts the 23S rRNA (bridge B1a) and protein L5 of the 50S subunit (bridge B1b), connecting the 2 subunits; these bridges are implicated in subunit movement. Contacts the tRNAs in the A and P-sites. The protein is Small ribosomal subunit protein uS13 of Cereibacter sphaeroides (strain ATCC 17025 / ATH 2.4.3) (Rhodobacter sphaeroides).